The primary structure comprises 431 residues: Histidinol dehydrogenase (431 aa).

3 residues coordinate NAD(+): Tyr-127, Gln-189, and Asn-212. The substrate site is built by Ser-237, Gln-259, and His-262. Zn(2+)-binding residues include Gln-259 and His-262. Catalysis depends on proton acceptor residues Glu-326 and His-327. The substrate site is built by His-327, Asp-360, Glu-414, and His-419. Asp-360 serves as a coordination point for Zn(2+). His-419 contributes to the Zn(2+) binding site.

The protein belongs to the histidinol dehydrogenase family. Requires Zn(2+) as cofactor.

It catalyses the reaction L-histidinol + 2 NAD(+) + H2O = L-histidine + 2 NADH + 3 H(+). It participates in amino-acid biosynthesis; L-histidine biosynthesis; L-histidine from 5-phospho-alpha-D-ribose 1-diphosphate: step 9/9. Its function is as follows. Catalyzes the sequential NAD-dependent oxidations of L-histidinol to L-histidinaldehyde and then to L-histidine. The sequence is that of Histidinol dehydrogenase from Xanthomonas campestris pv. campestris (strain 8004).